The chain runs to 524 residues: Alkaline phosphatase, tissue-nonspecific isozyme (524 aa).

The N-terminal stretch at 1–17 (MISPFLVLAIGTCLTNS) is a signal peptide. Mg(2+) is bound at residue D60. Residues D60 and S110 each contribute to the Zn(2+) site. S110 functions as the Phosphoserine intermediate in the catalytic mechanism. At S110 the chain carries Phosphoserine. A disulfide bond links C139 and C201. A glycan (N-linked (GlcNAc...) asparagine) is linked at N140. T173 is a binding site for Mg(2+). A glycan (N-linked (GlcNAc...) asparagine) is linked at N230. E235 is a Ca(2+) binding site. N-linked (GlcNAc...) asparagine glycosylation is present at N271. Positions 290 and 291 each coordinate Ca(2+). Residue N303 is glycosylated (N-linked (GlcNAc...) asparagine). D306 serves as a coordination point for Ca(2+). E332 is a binding site for Mg(2+). Zn(2+)-binding residues include D337, H341, D378, and H379. N-linked (GlcNAc...) asparagine glycosylation is present at N430. H454 contacts Zn(2+). C489 and C497 are disulfide-bonded. G501 carries the GPI-anchor amidated glycine lipid modification. The propeptide at 502-524 (SGSAPSPGALLLPLAVLSLRTLF) is removed in mature form.

It belongs to the alkaline phosphatase family. Homodimer. It depends on Mg(2+) as a cofactor. Zn(2+) serves as cofactor. Ca(2+) is required as a cofactor. In terms of processing, N-glycosylated. As to expression, widely expressed. Expressed in DRG neurons and spinal cord neurons.

It is found in the cell membrane. It localises to the extracellular vesicle membrane. Its subcellular location is the mitochondrion membrane. The protein resides in the mitochondrion intermembrane space. The catalysed reaction is a phosphate monoester + H2O = an alcohol + phosphate. It carries out the reaction diphosphate + H2O = 2 phosphate + H(+). It catalyses the reaction pyridoxal 5'-phosphate + H2O = pyridoxal + phosphate. The enzyme catalyses phosphoethanolamine + H2O = ethanolamine + phosphate. The catalysed reaction is N-phosphocreatine + H2O = creatine + phosphate. It carries out the reaction ATP + H2O = ADP + phosphate + H(+). It catalyses the reaction ADP + H2O = AMP + phosphate + H(+). The enzyme catalyses AMP + H2O = adenosine + phosphate. With respect to regulation, phosphatase activity is specifically inhibited by 5-((5-chloro-2-methoxyphenyl)sulfonamido)nicotinamide (SBI-425). Alkaline phosphatase that metabolizes various phosphate compounds and plays a key role in skeletal mineralization and adaptive thermogenesis. Has broad substrate specificity and can hydrolyze a considerable variety of compounds: however, only a few substrates, such as diphosphate (inorganic pyrophosphate; PPi), pyridoxal 5'-phosphate (PLP) and N-phosphocreatine are natural substrates. Plays an essential role in skeletal and dental mineralization via its ability to hydrolyze extracellular diphosphate, a potent mineralization inhibitor, to phosphate: it thereby promotes hydroxyapatite crystal formation and increases inorganic phosphate concentration. Acts in a non-redundant manner with PHOSPHO1 in skeletal mineralization: while PHOSPHO1 mediates the initiation of hydroxyapatite crystallization in the matrix vesicles (MVs), ALPL/TNAP catalyzes the spread of hydroxyapatite crystallization in the extracellular matrix. Also promotes dephosphorylation of osteopontin (SSP1), an inhibitor of hydroxyapatite crystallization in its phosphorylated state; it is however unclear whether ALPL/TNAP mediates SSP1 dephosphorylation via a direct or indirect manner. Catalyzes dephosphorylation of PLP to pyridoxal (PL), the transportable form of vitamin B6, in order to provide a sufficient amount of PLP in the brain, an essential cofactor for enzymes catalyzing the synthesis of diverse neurotransmitters. Additionally, also able to mediate ATP degradation in a stepwise manner to adenosine, thereby regulating the availability of ligands for purinergic receptors. Also capable of dephosphorylating microbial products, such as lipopolysaccharides (LPS) as well as other phosphorylated small-molecules, such as poly-inosine:cytosine (poly I:C). Acts as a key regulator of adaptive thermogenesis as part of the futile creatine cycle: localizes to the mitochondria of thermogenic fat cells and acts by mediating hydrolysis of N-phosphocreatine to initiate a futile cycle of creatine dephosphorylation and phosphorylation. During the futile creatine cycle, creatine and N-phosphocreatine are in a futile cycle, which dissipates the high energy charge of N-phosphocreatine as heat without performing any mechanical or chemical work. The polypeptide is Alkaline phosphatase, tissue-nonspecific isozyme (Mus musculus (Mouse)).